The primary structure comprises 141 residues: Alpha-lactalbumin (141 aa).

Residues 1-19 form the signal peptide; the sequence is MMPLVPLLLVSIVFPGIQA. In terms of domain architecture, C-type lysozyme spans 20-141; the sequence is TQLTRCELTE…ENLEQWVCKK (122 aa). Cystine bridges form between C25-C139, C47-C130, C80-C96, and C92-C110. N-linked (GlcNAc...) asparagine glycosylation occurs at N64. Ca(2+) is bound by residues D101, D106, and D107.

The protein belongs to the glycosyl hydrolase 22 family. As to quaternary structure, lactose synthase (LS) is a heterodimer of a catalytic component, beta1,4-galactosyltransferase (beta4Gal-T1) and a regulatory component, alpha-lactalbumin (LA). In terms of tissue distribution, mammary gland specific. Secreted in milk.

It is found in the secreted. Its function is as follows. Regulatory subunit of lactose synthase, changes the substrate specificity of galactosyltransferase in the mammary gland making glucose a good acceptor substrate for this enzyme. This enables LS to synthesize lactose, the major carbohydrate component of milk. In other tissues, galactosyltransferase transfers galactose onto the N-acetylglucosamine of the oligosaccharide chains in glycoproteins. The protein is Alpha-lactalbumin (LALBA) of Oryctolagus cuniculus (Rabbit).